Consider the following 295-residue polypeptide: 3-hydroxy-5-phosphonooxypentane-2,4-dione thiolase (295 aa).

K203 acts as the Schiff-base intermediate with substrate in catalysis.

The protein belongs to the DeoC/FbaB aldolase family. In terms of assembly, homodecamer.

The protein resides in the cytoplasm. It catalyses the reaction dihydroxyacetone phosphate + acetyl-CoA = 3-hydroxy-2,4-dioxopentyl phosphate + CoA. Its function is as follows. Involved in the degradation of phospho-AI-2, thereby terminating induction of the lsr operon and closing the AI-2 signaling cycle. Catalyzes the transfer of an acetyl moiety from 3-hydroxy-5-phosphonooxypentane-2,4-dione to CoA to form glycerone phosphate and acetyl-CoA. This is 3-hydroxy-5-phosphonooxypentane-2,4-dione thiolase from Enterobacter sp. (strain 638).